A 405-amino-acid polypeptide reads, in one-letter code: Probable tRNA sulfurtransferase (405 aa).

Residues 60 to 165 (AEVDKRLKKV…QDAVYISNQL (106 aa)) form the THUMP domain. ATP contacts are provided by residues 183-184 (ML), 208-209 (HF), Arg-265, Gly-287, and Gln-296.

It belongs to the ThiI family.

Its subcellular location is the cytoplasm. It catalyses the reaction [ThiI sulfur-carrier protein]-S-sulfanyl-L-cysteine + a uridine in tRNA + 2 reduced [2Fe-2S]-[ferredoxin] + ATP + H(+) = [ThiI sulfur-carrier protein]-L-cysteine + a 4-thiouridine in tRNA + 2 oxidized [2Fe-2S]-[ferredoxin] + AMP + diphosphate. The catalysed reaction is [ThiS sulfur-carrier protein]-C-terminal Gly-Gly-AMP + S-sulfanyl-L-cysteinyl-[cysteine desulfurase] + AH2 = [ThiS sulfur-carrier protein]-C-terminal-Gly-aminoethanethioate + L-cysteinyl-[cysteine desulfurase] + A + AMP + 2 H(+). It functions in the pathway cofactor biosynthesis; thiamine diphosphate biosynthesis. Its function is as follows. Catalyzes the ATP-dependent transfer of a sulfur to tRNA to produce 4-thiouridine in position 8 of tRNAs, which functions as a near-UV photosensor. Also catalyzes the transfer of sulfur to the sulfur carrier protein ThiS, forming ThiS-thiocarboxylate. This is a step in the synthesis of thiazole, in the thiamine biosynthesis pathway. The sulfur is donated as persulfide by IscS. The chain is Probable tRNA sulfurtransferase from Lactobacillus helveticus (strain DPC 4571).